Reading from the N-terminus, the 309-residue chain is GTP cyclohydrolase FolE2 (309 aa).

The protein belongs to the GTP cyclohydrolase IV family.

The catalysed reaction is GTP + H2O = 7,8-dihydroneopterin 3'-triphosphate + formate + H(+). It functions in the pathway cofactor biosynthesis; 7,8-dihydroneopterin triphosphate biosynthesis; 7,8-dihydroneopterin triphosphate from GTP: step 1/1. Its function is as follows. Converts GTP to 7,8-dihydroneopterin triphosphate. The chain is GTP cyclohydrolase FolE2 from Serratia proteamaculans (strain 568).